The following is a 500-amino-acid chain: Glycerol kinase (500 aa).

T14 contributes to the ADP binding site. Residues T14, T15, and S16 each coordinate ATP. T14 serves as a coordination point for sn-glycerol 3-phosphate. Position 18 (R18) interacts with ADP. Sn-glycerol 3-phosphate is bound by residues R84, E85, and Y136. The glycerol site is built by R84, E85, and Y136. H232 bears the Phosphohistidine; by HPr mark. D246 lines the sn-glycerol 3-phosphate pocket. Glycerol contacts are provided by D246 and Q247. The ADP site is built by T268 and G311. Residues T268, G311, Q315, and G412 each contribute to the ATP site. ADP is bound by residues G412 and N416.

This sequence belongs to the FGGY kinase family. As to quaternary structure, homotetramer and homodimer (in equilibrium). In terms of processing, the phosphoenolpyruvate-dependent sugar phosphotransferase system (PTS), including enzyme I, and histidine-containing protein (HPr) are required for the phosphorylation, which leads to the activation of the enzyme.

It carries out the reaction glycerol + ATP = sn-glycerol 3-phosphate + ADP + H(+). It functions in the pathway polyol metabolism; glycerol degradation via glycerol kinase pathway; sn-glycerol 3-phosphate from glycerol: step 1/1. Its activity is regulated as follows. Activated by phosphorylation and inhibited by fructose 1,6-bisphosphate (FBP). Functionally, key enzyme in the regulation of glycerol uptake and metabolism. Catalyzes the phosphorylation of glycerol to yield sn-glycerol 3-phosphate. In Streptococcus uberis (strain ATCC BAA-854 / 0140J), this protein is Glycerol kinase.